The sequence spans 935 residues: MLMAPQGRSSSKKRMGLNRWKRFTRKPSPQHAFGPDNVEHWIKRVEKASEFAVSNAFFTRNSDLPRSPWGQITDWKTSEQIEDHDEIYAEAQELVNDWLDSKLKQELASDEEGDAKNTVSSVSLVPEANDHLKYDKFDDLCGYLEEEEESTTVQKFIDHLLHKNVVDSAVMEDLGRKENQDKKQQKDPRLTMEMRHKQVKENRLRREKELEYQRIQKTLKKSAFLEAQCLVQEEKKRKALEAKKEEEEIQREMVKLRREIIERRRTVKEAWKIEKKRQEENSQNSSEKLMFQSTHILLDEEKMAKERKRKLKELLIQIFKENQQCQKRYFSAWHKLILDHRIKLGKAGTLSDWKIQLKVLRAWRDYTRSQKLQRETQALENDLREENRKQQLAAEHNRKQVLRHCFTEWQHWCGAELLKRELALTKEENRKKMDALLKAASLGKLSASESSGISLPEEATAVVGPPVRNGQVTAVPPLWEKPPLGSSDCMLSPPLGRTTGNLQGSLQNVPLSAPGNKQHKTLGVEPPQLPGSNETLRTTSQKAEPLCLGHFHSRHVFQQQLIEKQKKKLQEQQKTILELKKNQRLAEAQWAAEHASAVTDTQSHLLSKPRGEEEPRTCQMLVNSPVASPGTEGSRSDSRNCLSGRKRKPKQLMTPHPILKAMEERAIQRAERRRILAEKKKKQEEEKLAQLKAQEEERQKREAEEKEAQLERKREEKRLKKMKELEKQKRIKRNQQLEAIAKEHYEGVLLRKKGLEPWKILRMQSKQNVQVAEEHYCLFLQRKYLLTWFQCSQESLARKMAQADQFYSQILLKRVIRSWLQYMTDLQEEVRKFCVRFLQKKIFRAWFNMVREVKIDSRGKHEIAAEHSDRRILWITFRTWKKFVKFMKEERVKEERRQQLRRKVVEILPDFQVPGSDHELYQQSDTWSLSKTSLL.

Coiled coils occupy residues 189–324 (RLTM…ENQQ), 366–438 (YTRS…ALLK), 554–589 (RHVFQQQLIEKQKKKLQEQQKTILELKKNQRLAEAQ), and 660–740 (KAME…LEAI). Disordered stretches follow at residues 596–661 (SAVT…ILKA) and 678–715 (EKKKKQEEEKLAQLKAQEEERQKREAEEKEAQLERKRE).

The polypeptide is Coiled-coil domain-containing protein 191 (CCDC191) (Macaca fascicularis (Crab-eating macaque)).